A 384-amino-acid chain; its full sequence is Autophagy-related protein 25 (384 aa).

Coiled coils occupy residues 132-236 (KETA…RRAS) and 342-379 (KKNN…QWKT). Positions 224–247 (ESRLSNMNKRRASPRDDAEAEPKR) are disordered. Over residues 236-247 (SPRDDAEAEPKR) the composition is skewed to basic and acidic residues.

This sequence belongs to the ADIP family.

It is found in the preautophagosomal structure membrane. Functionally, specifically required for selective degradation of peroxisomes via macropexophagy. In Pichia angusta (Yeast), this protein is Autophagy-related protein 25 (ATG25).